Here is a 282-residue protein sequence, read N- to C-terminus: Probable endonuclease 4 (282 aa).

Residues histidine 69, histidine 109, glutamate 145, aspartate 179, histidine 182, histidine 216, aspartate 229, histidine 231, and glutamate 261 each coordinate Zn(2+).

This sequence belongs to the AP endonuclease 2 family. The cofactor is Zn(2+).

It catalyses the reaction Endonucleolytic cleavage to 5'-phosphooligonucleotide end-products.. Endonuclease IV plays a role in DNA repair. It cleaves phosphodiester bonds at apurinic or apyrimidinic (AP) sites, generating a 3'-hydroxyl group and a 5'-terminal sugar phosphate. The chain is Probable endonuclease 4 from Edwardsiella ictaluri (strain 93-146).